The chain runs to 142 residues: Hemoglobin subunit alpha-1 (142 aa).

The region spanning Val-2–Arg-142 is the Globin domain. An O2-binding site is contributed by His-59. A heme b-binding site is contributed by His-88.

The protein belongs to the globin family. As to quaternary structure, heterotetramer of two alpha chains and two beta chains. In terms of tissue distribution, red blood cells.

In terms of biological role, involved in oxygen transport from the lung to the various peripheral tissues. Hemopressin acts as an antagonist peptide of the cannabinoid receptor CNR1. Hemopressin-binding efficiently blocks cannabinoid receptor CNR1 and subsequent signaling. This is Hemoglobin subunit alpha-1 (HBA1) from Hylobates lar (Lar gibbon).